The following is a 55-amino-acid chain: Large ribosomal subunit protein bL32 (55 aa).

Over residues 1-23 (MAVPKKKTSKAKRDQRRAHWKRK) the composition is skewed to basic residues. Positions 1–26 (MAVPKKKTSKAKRDQRRAHWKRKATI) are disordered.

The protein belongs to the bacterial ribosomal protein bL32 family.

This chain is Large ribosomal subunit protein bL32, found in Picosynechococcus sp. (strain ATCC 27264 / PCC 7002 / PR-6) (Agmenellum quadruplicatum).